The following is a 369-amino-acid chain: Serine/threonine-protein acetyltransferase HopZ1a (369 aa).

The segment at 1–46 (MGNVCVGGSRMSHQVYSPDRADTPPRSERNTPDRRQRAAGDAERTQ) is disordered. Residues 19 to 46 (DRADTPPRSERNTPDRRQRAAGDAERTQ) show a composition bias toward basic and acidic residues. 1D-myo-inositol hexakisphosphate is bound by residues arginine 49, lysine 53, and arginine 106. Residues histidine 150 and glutamate 170 contribute to the active site. Histidine 150 contacts CoA. CoA-binding positions include alanine 177 and 211 to 212 (KT). Cysteine 216 is a catalytic residue. 1D-myo-inositol hexakisphosphate is bound by residues asparagine 222, 226 to 229 (KAHK), and 289 to 290 (KH). Lysine 289 carries the N6-acetyllysine; by autocatalysis modification. Position 292 to 295 (292 to 295 (ASLT)) interacts with CoA. 1D-myo-inositol hexakisphosphate is bound by residues 314–317 (SEGH) and arginine 326. Residues 331–334 (RVKR) and 344–348 (SNTQF) each bind CoA. Glutamine 358 and arginine 362 together coordinate 1D-myo-inositol hexakisphosphate.

The protein belongs to the acetyltransferase YopJ family. As to quaternary structure, interacts with host plant JAZ proteins (e.g. Glycine max JAZ1 and Arabidospis thaliana TIFY10B/JAZ2, TIFY11A/JAZ5, TIFY11B/JAZ6, TIFY5A/JAZ8 and TIFY3B/JAZ12) and triggers their degradation. Binds directly to SZE1 and SZE2 at the host plasma membrane; this interaction with a complex made of, at least, SZE1, BKN2/SZE2, ZAR1 and ZED1 triggers host immunity. 1D-myo-inositol hexakisphosphate serves as cofactor. Autoacetylated at Lys-289; while autoacetylation at Lys-289 is required for virulence function to some extent, it is not essential.

It localises to the secreted. The protein resides in the host cell membrane. Its subcellular location is the host cytoplasm. It is found in the host cytoskeleton. The protein localises to the host nucleus. It carries out the reaction L-threonyl-[protein] + acetyl-CoA = O-acetyl-L-threonyl-[protein] + CoA. The enzyme catalyses L-seryl-[protein] + acetyl-CoA = O-acetyl-L-seryl-[protein] + CoA. The catalysed reaction is L-lysyl-[protein] + acetyl-CoA = N(6)-acetyl-L-lysyl-[protein] + CoA + H(+). With respect to regulation, 1D-myo-inositol hexakisphosphate activates protein-acetyltransferase activity via an allosteric mechanism: 1D-myo-inositol hexakisphosphate-binding induces a conformational rearrangement that stimulates the interaction with acetyl-CoA. Acetyltransferase activity is activated by phytic acid. Serine/threonine-protein acetyltransferase translocated into infected cells, which impairs host microtubule network and host immunity by mediating acetylation of target proteins. Blocks secretion in host cells by mediating acetylation of host tubulin, thereby impairing host microbubule network. Impairs host cell immunity by mediating acetylation of host TIFY/JAZ transcription repressors (Arabidopsis thaliana TIFY10B/JAZ2, TIFY11A/JAZ5, TIFY11B/JAZ6, TIFY5A/JAZ8, TIFY9/JAZ10 and TIFY3B/JAZ12), thereby activating host jasmonate signaling. The polypeptide is Serine/threonine-protein acetyltransferase HopZ1a (Pseudomonas syringae pv. syringae).